Reading from the N-terminus, the 62-residue chain is MARKCFFTGKGPMVGNNVSHANNKTKKRSLPNLRSIRLKLEDGTSVRVKVAASTLRTIKKYS.

The protein belongs to the bacterial ribosomal protein bL28 family.

This chain is Large ribosomal subunit protein bL28, found in Helicobacter hepaticus (strain ATCC 51449 / 3B1).